Reading from the N-terminus, the 438-residue chain is Xylose isomerase (438 aa).

Catalysis depends on residues histidine 100 and aspartate 103. Mg(2+)-binding residues include glutamate 231, glutamate 267, histidine 270, aspartate 295, aspartate 306, aspartate 308, and aspartate 338.

Belongs to the xylose isomerase family. As to quaternary structure, homotetramer. Requires Mg(2+) as cofactor.

The protein resides in the cytoplasm. It carries out the reaction alpha-D-xylose = alpha-D-xylulofuranose. The polypeptide is Xylose isomerase (Pseudomonas savastanoi pv. phaseolicola (strain 1448A / Race 6) (Pseudomonas syringae pv. phaseolicola (strain 1448A / Race 6))).